A 578-amino-acid chain; its full sequence is MLNAVGHGGRAAVGPVMGKIMAERPDLRPQAKQIVAIVREVVEEVNKLSLEEQKRLLEEKYSWVIEKKLQKRREAVEKKLPPLPDAEEGRVVTRFAPNPDFVIHLGNARPALLSYEYAVMYRGKMILRFEDTDPRIKTPLPEAYELIREDLKWLGIRWDEEYIQSLRMHIYYDIARKLIEVGGAYVDDRSPEEFRRYRDEGRLEDYPPRKRSVEENLELWDKMVSGAFGEGEAVLRVKTDPRHPDPSVRDWVAFRIIDTSRYPHPLVGDRYVAWPTYNFAAAVDDKLMGVTHILRAKEHMQNTIKQQFLYKHLGWSYPHVVHFGRLKLEGFIMSKSTLKRFLDAGISRGIDDPRFATIAGLRRRGIVPEAIKKLIMEVGVKYTDASISYDNLAAINRSIIDPRAKRIMAALSPVPVEVEGLPWREKEFRIPFHPSGQLGERIVKLAGPKATIYVSQSDAVQLAKGNIVRLMEAFNIEVLGASPRRVRARYHSLTVDEARQHNAPIIQWVPATDNIAVEVLKPEGLDLVQERGLAEPAAAQLKPGEIIQLVRIGFARVDSVETDEKGKVRKVVLIYAHD.

The 'HIGH' region signature appears at 97–107; sequence PNPDFVIHLGN.

It belongs to the class-I aminoacyl-tRNA synthetase family. Glutamate--tRNA ligase type 2 subfamily.

It localises to the cytoplasm. It catalyses the reaction tRNA(Glu) + L-glutamate + ATP = L-glutamyl-tRNA(Glu) + AMP + diphosphate. Catalyzes the attachment of glutamate to tRNA(Glu) in a two-step reaction: glutamate is first activated by ATP to form Glu-AMP and then transferred to the acceptor end of tRNA(Glu). The chain is Glutamate--tRNA ligase from Hyperthermus butylicus (strain DSM 5456 / JCM 9403 / PLM1-5).